Reading from the N-terminus, the 92-residue chain is Small ribosomal subunit protein uS17 (92 aa).

It belongs to the universal ribosomal protein uS17 family. As to quaternary structure, part of the 30S ribosomal subunit.

Its function is as follows. One of the primary rRNA binding proteins, it binds specifically to the 5'-end of 16S ribosomal RNA. This chain is Small ribosomal subunit protein uS17, found in Wigglesworthia glossinidia brevipalpis.